Consider the following 141-residue polypeptide: Nucleoside diphosphate kinase (141 aa).

Residues Lys11, Phe59, Arg87, Thr93, Arg104, and Asn114 each coordinate ATP. His117 (pros-phosphohistidine intermediate) is an active-site residue.

Belongs to the NDK family. In terms of assembly, homotetramer. It depends on Mg(2+) as a cofactor.

The protein localises to the cytoplasm. The enzyme catalyses a 2'-deoxyribonucleoside 5'-diphosphate + ATP = a 2'-deoxyribonucleoside 5'-triphosphate + ADP. It carries out the reaction a ribonucleoside 5'-diphosphate + ATP = a ribonucleoside 5'-triphosphate + ADP. Major role in the synthesis of nucleoside triphosphates other than ATP. The ATP gamma phosphate is transferred to the NDP beta phosphate via a ping-pong mechanism, using a phosphorylated active-site intermediate. In Paracidovorax citrulli (strain AAC00-1) (Acidovorax citrulli), this protein is Nucleoside diphosphate kinase.